Here is a 283-residue protein sequence, read N- to C-terminus: Phosphatidylglycerol--prolipoprotein diacylglyceryl transferase (283 aa).

Helical transmembrane passes span 17–37 (LAVR…TFLG), 56–76 (FLTW…VLFY), and 88–108 (IFKV…VVIA). Residue R139 coordinates a 1,2-diacyl-sn-glycero-3-phospho-(1'-sn-glycerol). 2 helical membrane passes run 222 to 242 (GQVA…AEFA) and 255 to 275 (GLSM…VGFV).

It belongs to the Lgt family.

Its subcellular location is the cell inner membrane. The catalysed reaction is L-cysteinyl-[prolipoprotein] + a 1,2-diacyl-sn-glycero-3-phospho-(1'-sn-glycerol) = an S-1,2-diacyl-sn-glyceryl-L-cysteinyl-[prolipoprotein] + sn-glycerol 1-phosphate + H(+). Its pathway is protein modification; lipoprotein biosynthesis (diacylglyceryl transfer). Its function is as follows. Catalyzes the transfer of the diacylglyceryl group from phosphatidylglycerol to the sulfhydryl group of the N-terminal cysteine of a prolipoprotein, the first step in the formation of mature lipoproteins. In Neisseria meningitidis serogroup B (strain ATCC BAA-335 / MC58), this protein is Phosphatidylglycerol--prolipoprotein diacylglyceryl transferase.